We begin with the raw amino-acid sequence, 103 residues long: Large ribosomal subunit protein uL23 (103 aa).

Belongs to the universal ribosomal protein uL23 family. Part of the 50S ribosomal subunit. Contacts protein L29, and trigger factor when it is bound to the ribosome.

Its function is as follows. One of the early assembly proteins it binds 23S rRNA. One of the proteins that surrounds the polypeptide exit tunnel on the outside of the ribosome. Forms the main docking site for trigger factor binding to the ribosome. The polypeptide is Large ribosomal subunit protein uL23 (Prochlorococcus marinus (strain NATL1A)).